Reading from the N-terminus, the 208-residue chain is MSETVPAASAGAVPAVMEKPLTKKRGKKPAGLTSASRKAPNLSVSKLITEALSVSQERVGMSLAALKKALAAAGYDVEKNNSRIKLSLKSLVNKGILVQTRGTGASGSFKLSKKVLPKSTRRKANKSASAKTKKLVLSRDSKSPKTAKTNKRAKKPRATAPKKAVRSGRKAKGAKGKQQQKSPVKARATKPKLTQHHKANIRKATSRK.

Low complexity predominate over residues 1–16 (MSETVPAASAGAVPAV). Residues 1–40 (MSETVPAASAGAVPAVMEKPLTKKRGKKPAGLTSASRKAP) form a disordered region. S9 carries the phosphoserine modification. Positions 40–113 (PNLSVSKLIT…GASGSFKLSK (74 aa)) constitute an H15 domain. A Citrulline modification is found at R58. Residues 102 to 208 (GTGASGSFKL…ANIRKATSRK (107 aa)) are disordered. The span at 111–136 (LSKKVLPKSTRRKANKSASAKTKKLV) shows a compositional bias: basic residues. The residue at position 143 (S143) is a Phosphoserine. Residues 148–157 (KTNKRAKKPR) are compositionally biased toward basic residues. Phosphothreonine is present on T159. The span at 163 to 175 (KAVRSGRKAKGAK) shows a compositional bias: basic residues. 2 positions are modified to phosphoserine: S167 and S182. Residues 187-208 (RATKPKLTQHHKANIRKATSRK) are compositionally biased toward basic residues.

It belongs to the histone H1/H5 family. Post-translationally, phosphorylated in early spermatids. Citrullination at Arg-58 (H1R54ci) by PADI4 takes place within the DNA-binding site of H1 and results in its displacement from chromatin and global chromatin decondensation, thereby promoting pluripotency and stem cell maintenance.

Its function is as follows. Testis-specific histone H1 that forms less compacted chromatin compared to other H1 histone subtypes. Formation of more relaxed chromatin may be required to promote chromatin architecture required for proper chromosome regulation during meiosis, such as homologous recombination. Histones H1 act as linkers that bind to nucleosomes and compact polynucleosomes into a higher-order chromatin configuration. The polypeptide is Histone H1t (Macaca mulatta (Rhesus macaque)).